Consider the following 48-residue polypeptide: M-oxotoxin-Ot1c (48 aa).

The protein resides in the secreted. The protein localises to the target cell membrane. Disrupts cell membranes, particularly those rich in phosphocholine, through formation of pores. Has antimicrobial activity, hemolytic activity and insecticidal activity. This is M-oxotoxin-Ot1c from Oxyopes takobius (Lynx spider).